Here is a 675-residue protein sequence, read N- to C-terminus: Cytoplasmic tyrosine-protein kinase BMX (675 aa).

In terms of domain architecture, PH spans 4 to 111 (KSILEELLLK…WLKALQKEIR (108 aa)). The Btk-type zinc-finger motif lies at 113–149 (NPHLLVKYHSGFFVDGKFLCCQQSCKAAPGCTLWEAY). The Zn(2+) site is built by H121, C132, C133, and C143. Phosphotyrosine; by autocatalysis is present on residues Y216 and Y224. In terms of domain architecture, SH2 spans 296 to 392 (WFAGNISRSQ…GMITRLRHPV (97 aa)). In terms of domain architecture, Protein kinase spans 417 to 675 (ITLLKELGSG…IEPLREKDKH (259 aa)). ATP is bound by residues 423–431 (LGSGQFGVV) and K445. D536 (proton acceptor) is an active-site residue. A Phosphotyrosine; by SRC and autocatalysis modification is found at Y566. Residues 596 to 603 (WAFGILMW) carry the CAV1-binding motif.

The protein belongs to the protein kinase superfamily. Tyr protein kinase family. TEC subfamily. In terms of assembly, interacts with BCAR1, CAV1, MYD88, PTK2/FAK1, RUFY1, RUFY2, STAT3, TIRAP and TNFRSF1B. It depends on Zn(2+) as a cofactor. Post-translationally, phosphorylated in response to protein I/II and to LPS. Phosphorylation at Tyr-566 by SRC and by autocatalysis leads to activation and is required for STAT3 phosphorylation by BMX. Highly expressed in cells with great migratory potential, including endothelial cells and metastatic carcinoma cell lines.

It localises to the cytoplasm. It catalyses the reaction L-tyrosyl-[protein] + ATP = O-phospho-L-tyrosyl-[protein] + ADP + H(+). With respect to regulation, TEK and vascular endothelial growth factor receptor 1 (FLT1) stimulate BMX tyrosine kinase activity. Activated by integrins through the mediation of PTK2/FAK1. Activated by TNF through the mediation of TNFRSF1B. Its function is as follows. Non-receptor tyrosine kinase that plays central but diverse modulatory roles in various signaling processes involved in the regulation of actin reorganization, cell migration, cell proliferation and survival, cell adhesion, and apoptosis. Participates in signal transduction stimulated by growth factor receptors, cytokine receptors, G-protein coupled receptors, antigen receptors and integrins. Induces tyrosine phosphorylation of BCAR1 in response to integrin regulation. Activation of BMX by integrins is mediated by PTK2/FAK1, a key mediator of integrin signaling events leading to the regulation of actin cytoskeleton and cell motility. Plays a critical role in TNF-induced angiogenesis, and implicated in the signaling of TEK and FLT1 receptors, 2 important receptor families essential for angiogenesis. Required for the phosphorylation and activation of STAT3, a transcription factor involved in cell differentiation. Also involved in interleukin-6 (IL6) induced differentiation. Also plays a role in programming adaptive cytoprotection against extracellular stress in different cell systems, salivary epithelial cells, brain endothelial cells, and dermal fibroblasts. May be involved in regulation of endocytosis through its interaction with an endosomal protein RUFY1. May also play a role in the growth and differentiation of hematopoietic cells; as well as in signal transduction in endocardial and arterial endothelial cells. The sequence is that of Cytoplasmic tyrosine-protein kinase BMX (BMX) from Homo sapiens (Human).